The chain runs to 148 residues: Ribonuclease H (148 aa).

Residues Met1 to Asp142 enclose the RNase H type-1 domain. Mg(2+) is bound by residues Asp10, Glu48, Asp70, and Asp134. The tract at residues Gly129–Arg148 is disordered.

This sequence belongs to the RNase H family. Monomer. It depends on Mg(2+) as a cofactor.

It is found in the cytoplasm. The catalysed reaction is Endonucleolytic cleavage to 5'-phosphomonoester.. Its function is as follows. Endonuclease that specifically degrades the RNA of RNA-DNA hybrids. This Pseudomonas entomophila (strain L48) protein is Ribonuclease H.